The following is a 153-amino-acid chain: MQRSKIKVEIKRLSHGEDLSLPCYATTQSAGMDLYAALNDSAVLNPLERLLVPTGIVIAIPNGFEGQIRPRSGLAAKHGITVLNSPGTIDSDYRGEVKICLINLSNQPYEIKRGDRIAQILISPVSQVIWDDREEFCAEETGRNAGGFGSSGR.

Residues 71 to 73 (RSG), asparagine 84, 88 to 90 (TID), and lysine 98 each bind substrate.

Belongs to the dUTPase family. Mg(2+) is required as a cofactor.

It catalyses the reaction dUTP + H2O = dUMP + diphosphate + H(+). It participates in pyrimidine metabolism; dUMP biosynthesis; dUMP from dCTP (dUTP route): step 2/2. Its function is as follows. This enzyme is involved in nucleotide metabolism: it produces dUMP, the immediate precursor of thymidine nucleotides and it decreases the intracellular concentration of dUTP so that uracil cannot be incorporated into DNA. The chain is Deoxyuridine 5'-triphosphate nucleotidohydrolase from Wolbachia pipientis wMel.